The sequence spans 318 residues: Non-homologous end joining protein Ku (318 aa).

The region spanning 10–193 (AFGLVNVPVK…EVQIKPAELK (184 aa)) is the Ku domain. The interval 259-318 (SVKARKGGKSDSKDDSDSESDSKESKSDSKPAKKAPAKKAAAKKSTAKKAPAKKAAAKKS) is disordered. Basic and acidic residues predominate over residues 266–289 (GKSDSKDDSDSESDSKESKSDSKP). Basic residues predominate over residues 290–318 (AKKAPAKKAAAKKSTAKKAPAKKAAAKKS).

It belongs to the prokaryotic Ku family. In terms of assembly, homodimer. Interacts with Sir2 and probably also with LigD; may form a trimeric complex during NHEJ.

Functionally, with LigD forms a non-homologous end joining (NHEJ) repair enzyme which repairs blunt-end and 5'-overhang double strand breaks (DSB) with about 50% fidelity, and DSB with non-complementary 3' ends. Plays a partial role in NHEJ on 3'-overhang repair of complementary ends. NHEJ repairs DSB with blunt ends and 5' overhangs with a high level of nucleotide insertion/deletion, without a need for microhomology. This protein but not LigD also suppresses homologous recombination. Overexpression dramatically increases the efficiency of NHEJ with no effect on repair fidelity. The chain is Non-homologous end joining protein Ku from Mycolicibacterium smegmatis (strain ATCC 700084 / mc(2)155) (Mycobacterium smegmatis).